The chain runs to 96 residues: Secreted RxLR effector protein 123 (96 aa).

The signal sequence occupies residues 1–22 (MVGAYYVGIALLVAGGSQTAAG). Residues 49 to 70 (RFLRKSRNPKDNLMLSEANEER) carry the RxLR-dEER motif. A disordered region spans residues 57 to 96 (PKDNLMLSEANEERTPSSPSNSLTEFIVSEPITTNVMRTE). The segment covering 87 to 96 (PITTNVMRTE) has biased composition (polar residues).

It belongs to the RxLR effector family.

Its subcellular location is the secreted. It is found in the host nucleus. The protein localises to the host cytoplasm. Functionally, secreted effector that dos not suppress the host cell death induced by cell death-inducing proteins. This is Secreted RxLR effector protein 123 from Plasmopara viticola (Downy mildew of grapevine).